We begin with the raw amino-acid sequence, 320 residues long: Ferrochelatase (320 aa).

2 residues coordinate Fe cation: His194 and Glu275.

The protein belongs to the ferrochelatase family. Monomer.

The protein localises to the cytoplasm. The catalysed reaction is heme b + 2 H(+) = protoporphyrin IX + Fe(2+). The protein operates within porphyrin-containing compound metabolism; protoheme biosynthesis; protoheme from protoporphyrin-IX: step 1/1. In terms of biological role, catalyzes the ferrous insertion into protoporphyrin IX. The protein is Ferrochelatase of Escherichia coli (strain 55989 / EAEC).